The primary structure comprises 518 residues: Vesicular inhibitory amino acid transporter (518 aa).

At 1–125 the chain is on the cytoplasmic side; the sequence is MATLIRSKLS…WNVTNAIQGM (125 aa). A disordered region spans residues 66–98; that stretch reads EVPSGDPTAEGDSHYQRDGTGPPSSASKDEGLC. A helical transmembrane segment spans residues 126 to 146; the sequence is FVLGLPYAILHGGYLGLFLII. The Lumenal, vesicle segment spans residues 147–197; it reads FAAVVCCYTGKILIACLYEENEDGETVRVRDSYVDIANACCAPRFPKLGGR. A helical transmembrane segment spans residues 198 to 218; the sequence is VVNVAQIIELVMTCILYVVVS. Topologically, residues 219–258 are cytoplasmic; the sequence is GNLMYNSFPSLPISQKSWSIIATAMLLPCAFLKNLKAVSK. A helical membrane pass occupies residues 259–279; it reads FSLLCTLAHFVINVLVIAYCL. At 280-298 the chain is on the lumenal, vesicle side; the sequence is SRARDWAWDKVKFYIDVKK. A helical membrane pass occupies residues 299-319; that stretch reads FPISIGIIVFSYTSQIFLPSL. At 320–334 the chain is on the cytoplasmic side; sequence EGNMQSPKEFHCMMN. Residues 335–355 form a helical membrane-spanning segment; it reads WTHIAACILKGLFALVAYLTW. At 356–376 the chain is on the lumenal, vesicle side; the sequence is ADETKEVITDNLPSTIRAVVN. The helical transmembrane segment at 377-397 threads the bilayer; sequence LFLVAKALLSYPLPFFAAVEV. Topologically, residues 398 to 431 are cytoplasmic; sequence LEKSLFQEGARAFFPNCYGGDGRLKSWGLTLRCA. A helical transmembrane segment spans residues 432 to 452; that stretch reads LVVFTLLMAIYVPHFALLMGL. Residues 453–454 are Lumenal, vesicle-facing; that stretch reads TG. A helical membrane pass occupies residues 455–475; that stretch reads SLTGAGLCFLLPSLFHLKLLW. At 476 to 482 the chain is on the cytoplasmic side; it reads RKLQWHQ. Residues 483–503 traverse the membrane as a helical segment; that stretch reads VFFDVSIFVIGSICSVSGFVH. Residues 504 to 518 are Lumenal, vesicle-facing; sequence SLEGLIEAFRFNIED.

This sequence belongs to the amino acid/polyamine transporter 2 family.

It is found in the cytoplasmic vesicle membrane. Its subcellular location is the presynapse. It catalyses the reaction 4-aminobutanoate(out) + n H(+)(in) = 4-aminobutanoate(in) + n H(+)(out). The enzyme catalyses glycine(out) + n H(+)(in) = glycine(in) + n H(+)(out). It carries out the reaction beta-alanine(out) + n H(+)(in) = beta-alanine(in) + n H(+)(out). Antiporter that exchanges vesicular protons for cytosolic 4-aminobutanoate or to a lesser extend glycine, thus allowing their secretion from nerve terminals. The transport is equally dependent on the chemical and electrical components of the proton gradient. May also transport beta-alanine. Acidification of GABAergic synaptic vesicles is a prerequisite for 4-aminobutanoate uptake. This chain is Vesicular inhibitory amino acid transporter, found in Xenopus tropicalis (Western clawed frog).